The following is a 633-amino-acid chain: Phospholipid--sterol O-acyltransferase (633 aa).

The Cytoplasmic segment spans residues methionine 1–lysine 6. The helical; Signal-anchor for type II membrane protein transmembrane segment at serine 7–glutamate 29 threads the bilayer. At aspartate 30 to isoleucine 633 the chain is on the lumenal side. Serine 195 functions as the Acyl-ester intermediate in the catalytic mechanism. Active-site charge relay system residues include aspartate 461 and histidine 505.

This sequence belongs to the AB hydrolase superfamily. Lipase family.

The protein localises to the microsome membrane. Functionally, involved in lipid catabolism. Essential for sterol esters biosynthesis in leaves and seeds, but not in flowers. Plays a role in controlling the free sterol content of leaves. Catalyzes the transacylation of acyl groups from phospholipids to a variety of different sterols. Prefers phosphatidylethanolamine over phosphatidylcholine as an acyl donor. Not active toward neutral lipids. Highly specific for position sn-2, which in plant lipids is essentially devoid of saturated acyl groups. Broad sterol specificity (cholesterol &gt; campesterol &gt; sitosterol &gt; stigmasterol), but no activity with lupeol or beta-amyrin. The protein is Phospholipid--sterol O-acyltransferase (PSAT) of Arabidopsis thaliana (Mouse-ear cress).